We begin with the raw amino-acid sequence, 254 residues long: Agamous-like MADS-box protein AGL9 homolog (254 aa).

The 55-residue stretch at 3–57 folds into the MADS-box domain; sequence RGRVELKRIENKINRQVTFAKRRNGLLKKAYELSVLCDAEVALIIFSNRGKLYEF. The K-box domain maps to 91–181; it reads ELSSQQEYLK…RLRLADGYQM (91 aa).

It localises to the nucleus. Its function is as follows. Probable transcription factor active in inflorescence development and floral organogenesis. In Sinapis alba (White mustard), this protein is Agamous-like MADS-box protein AGL9 homolog (AGL9).